The following is a 109-amino-acid chain: Small ribosomal subunit protein uS17A (109 aa).

The protein belongs to the universal ribosomal protein uS17 family. In terms of assembly, part of the 30S ribosomal subunit.

In terms of biological role, one of the primary rRNA binding proteins, it binds specifically to the 5'-end of 16S ribosomal RNA. The sequence is that of Small ribosomal subunit protein uS17A from Methanosarcina acetivorans (strain ATCC 35395 / DSM 2834 / JCM 12185 / C2A).